We begin with the raw amino-acid sequence, 391 residues long: Period circadian protein (391 aa).

Disordered regions lie at residues 27 to 121 (VTAP…PPVT), 163 to 188 (MLEY…WEGE), 241 to 270 (GSSA…QFTQ), and 328 to 357 (SPSG…TSQA). The span at 93-114 (GTSGTGNSGDGGGGGGADGPGS) shows a compositional bias: gly residues. The segment covering 241–255 (GSSAGGNGSGTGNNN) has biased composition (gly residues).

In terms of assembly, forms a heterodimer with timeless (TIM); the complex then translocates into the nucleus. Phosphorylated with a circadian rhythmicity, probably by the double-time protein (dbt). Phosphorylation could be implicated in the stability of per monomer and in the formation of heterodimer per-tim.

Its subcellular location is the nucleus. The protein localises to the cytoplasm. It localises to the perinuclear region. Essential for biological clock functions. Determines the period length of circadian and ultradian rhythms; an increase in PER dosage leads to shortened circadian rhythms and a decrease leads to lengthened circadian rhythms. Essential for the circadian rhythmicity of locomotor activity, eclosion behavior, and for the rhythmic component of the male courtship song that originates in the thoracic nervous system. The biological cycle depends on the rhythmic formation and nuclear localization of the TIM-PER complex. Light induces the degradation of TIM, which promotes elimination of PER. Nuclear activity of the heterodimer coordinatively regulates PER and TIM transcription through a negative feedback loop. Behaves as a negative element in circadian transcriptional loop. Does not appear to bind DNA, suggesting indirect transcriptional inhibition. This Drosophila insularis (Fruit fly) protein is Period circadian protein (per).